Reading from the N-terminus, the 146-residue chain is Probable actin-related protein 2/3 complex subunit 5 (146 aa).

It belongs to the ARPC5 family. As to quaternary structure, component of the Arp2/3 complex composed of ARP2, ARP3, ARPC1B/p41-ARC, ARPC2/p34-ARC, ARPC3/p21-ARC, ARPC4/p20-ARC and ARPC5/p16-ARC.

It localises to the cytoplasm. The protein resides in the cytoskeleton. Functions as a component of the Arp2/3 complex which is involved in regulation of actin polymerization and together with an activating nucleation-promoting factor (NPF) mediates the formation of branched actin networks. The sequence is that of Probable actin-related protein 2/3 complex subunit 5 from Caenorhabditis elegans.